We begin with the raw amino-acid sequence, 391 residues long: Adaptive-response sensory kinase SasA (391 aa).

A Histidine kinase domain is found at 169–391 (MLAHDLRSPL…CFHFTLPVCR (223 aa)). Position 172 is a phosphohistidine; by autocatalysis (histidine 172).

Homooligomerizes. Interacts with KaiC. Participates in the KaiABC clock complex, whose core is composed of a KaiC homohexamer, 6 KaiB and up to 6 KaiA dimers. SasA and KaiB(fs) compete to bind to KaiC.

The catalysed reaction is ATP + protein L-histidine = ADP + protein N-phospho-L-histidine.. Its function is as follows. Member of the two-component regulatory system SasA/RpaA involved in genome-wide circadian gene expression. One of several clock output pathways. Participates in the Kai clock protein complex, the main circadian regulator in cyanobacteria, via its interaction with KaiC. KaiC enhances the autophosphorylation activity of SasA, which then transfers its phosphate group to RpaA to activate it. In addition to its output function, recruits fold-shifted KaiB (KaiB(fs)) to KaiC to cooperatively form the KaiB(6):KaiC(6) complex (independent of SasA kinase activity). Required for robustness of the circadian rhythm of gene expression and is involved in clock output, also required for adaptation to light/dark cycles. The protein is Adaptive-response sensory kinase SasA of Rippkaea orientalis (strain PCC 8801 / RF-1) (Cyanothece sp. (strain PCC 8801)).